The sequence spans 58 residues: SLFELEGKMILQETGKNPAKSYGVYGCNCGVGGRGKPKDATDRCCYVHKCCYKKLTGC.

A disulfide bridge connects residues C29 and C45.

As to expression, expressed by the venom gland.

It is found in the secreted. Its function is as follows. Wasp venom phospholipase A2 homolog that lacks enzymatic activity. This chain is Basic phospholipase A2 homolog PocTX, found in Polybia occidentalis (Paper wasp).